A 330-amino-acid polypeptide reads, in one-letter code: Methionyl-tRNA formyltransferase (330 aa).

A (6S)-5,6,7,8-tetrahydrofolate-binding site is contributed by 117–120 (SLLP).

It belongs to the Fmt family.

It carries out the reaction L-methionyl-tRNA(fMet) + (6R)-10-formyltetrahydrofolate = N-formyl-L-methionyl-tRNA(fMet) + (6S)-5,6,7,8-tetrahydrofolate + H(+). Functionally, attaches a formyl group to the free amino group of methionyl-tRNA(fMet). The formyl group appears to play a dual role in the initiator identity of N-formylmethionyl-tRNA by promoting its recognition by IF2 and preventing the misappropriation of this tRNA by the elongation apparatus. This is Methionyl-tRNA formyltransferase from Verminephrobacter eiseniae (strain EF01-2).